Reading from the N-terminus, the 533-residue chain is Calcium uptake protein 1 homolog, mitochondrial (533 aa).

A mitochondrion-targeting transit peptide spans 1 to 13 (MLRHNFRSSIFIR). Residues 127–147 (PFRPEASQKEESTDSGTEIEV) are disordered. 3 consecutive EF-hand domains span residues 270 to 305 (TSHADFALAFKIFDVDGNGALDKEEFTKVQQLIMSQ), 337 to 358 (KDGKGSLSSEKFIEFQERLQHD), and 465 to 500 (LSDHVVDVVITLFDDNLDGKLSHEEMVAVMRRRMRR). Residues Asp283, Asp285, Asn287, and Glu294 each contribute to the Ca(2+) site.

This sequence belongs to the MICU1 family. MICU1 subfamily.

It is found in the mitochondrion intermembrane space. The protein resides in the mitochondrion inner membrane. Its function is as follows. Calcium sensor of the mitochondrial calcium uniporter (mcu-1) channel, which senses calcium level via its EF-hand domains. At low calcium levels, micu-1 occludes the pore of the mcu-1 channel, preventing mitochondrial calcium uptake. At higher calcium levels, calcium-binding to micu-1 induces a conformational change that weakens mcu-1-micu-1 interactions and moves micu-1 away from the pore, allowing calcium permeation through the mcu-1 channel. Also required to protect against manganese toxicity by preventing manganese uptake by mcu-1. Modulates the activity of the mitochondrial calcium uniporter protein mcu-1 depending on the level of intracellular calcium in PLM touch receptor neurons following axonal injury. The sequence is that of Calcium uptake protein 1 homolog, mitochondrial from Caenorhabditis briggsae.